Here is a 338-residue protein sequence, read N- to C-terminus: S-adenosylmethionine:tRNA ribosyltransferase-isomerase (338 aa).

It belongs to the QueA family. As to quaternary structure, monomer.

The protein resides in the cytoplasm. It catalyses the reaction 7-aminomethyl-7-carbaguanosine(34) in tRNA + S-adenosyl-L-methionine = epoxyqueuosine(34) in tRNA + adenine + L-methionine + 2 H(+). The protein operates within tRNA modification; tRNA-queuosine biosynthesis. In terms of biological role, transfers and isomerizes the ribose moiety from AdoMet to the 7-aminomethyl group of 7-deazaguanine (preQ1-tRNA) to give epoxyqueuosine (oQ-tRNA). This Francisella tularensis subsp. holarctica (strain FTNF002-00 / FTA) protein is S-adenosylmethionine:tRNA ribosyltransferase-isomerase.